Reading from the N-terminus, the 247-residue chain is tRNA (guanine-N(7)-)-methyltransferase (247 aa).

S-adenosyl-L-methionine-binding positions include Gly70, Glu93–Ile94, Asn128–Ala129, and Leu148. Asp151 is a catalytic residue. An S-adenosyl-L-methionine-binding site is contributed by Ser226 to Glu228.

The protein belongs to the class I-like SAM-binding methyltransferase superfamily. TrmB family.

Its subcellular location is the nucleus. It carries out the reaction guanosine(46) in tRNA + S-adenosyl-L-methionine = N(7)-methylguanosine(46) in tRNA + S-adenosyl-L-homocysteine. Its pathway is tRNA modification; N(7)-methylguanine-tRNA biosynthesis. In terms of biological role, catalyzes the formation of N(7)-methylguanine at position 46 (m7G46) in tRNA. The chain is tRNA (guanine-N(7)-)-methyltransferase from Drosophila persimilis (Fruit fly).